Here is a 629-residue protein sequence, read N- to C-terminus: DNA mismatch repair protein MutL (629 aa).

The protein belongs to the DNA mismatch repair MutL/HexB family.

Functionally, this protein is involved in the repair of mismatches in DNA. It is required for dam-dependent methyl-directed DNA mismatch repair. May act as a 'molecular matchmaker', a protein that promotes the formation of a stable complex between two or more DNA-binding proteins in an ATP-dependent manner without itself being part of a final effector complex. The polypeptide is DNA mismatch repair protein MutL (Haemophilus influenzae (strain 86-028NP)).